Reading from the N-terminus, the 327-residue chain is Ferrochelatase (327 aa).

Residues His187 and Glu265 each contribute to the Fe cation site.

This sequence belongs to the ferrochelatase family.

Its subcellular location is the cytoplasm. The catalysed reaction is heme b + 2 H(+) = protoporphyrin IX + Fe(2+). The protein operates within porphyrin-containing compound metabolism; protoheme biosynthesis; protoheme from protoporphyrin-IX: step 1/1. Catalyzes the ferrous insertion into protoporphyrin IX. The sequence is that of Ferrochelatase from Chlamydia pneumoniae (Chlamydophila pneumoniae).